We begin with the raw amino-acid sequence, 255 residues long: ATP synthase subunit a 2 (255 aa).

A run of 5 helical transmembrane segments spans residues 26-46 (SINIDSMIMVWMVGLLFIGVF), 86-106 (LIGPLALTIFVWVFLMNSIDL), 131-151 (DVNVPVSMALGVFILIIGYTL), 205-225 (MIFILIALMPWWMQWALSVPW), and 230-250 (ILIVFLQAFIFMVLTIVYLAM).

It belongs to the ATPase A chain family. F-type ATPases have 2 components, CF(1) - the catalytic core - and CF(0) - the membrane proton channel. CF(1) has five subunits: alpha(3), beta(3), gamma(1), delta(1), epsilon(1). CF(0) has three main subunits: a(1), b(2) and c(9-12). The alpha and beta chains form an alternating ring which encloses part of the gamma chain. CF(1) is attached to CF(0) by a central stalk formed by the gamma and epsilon chains, while a peripheral stalk is formed by the delta and b chains.

The protein resides in the cell inner membrane. Functionally, key component of the proton channel; it plays a direct role in the translocation of protons across the membrane. This Photobacterium profundum (strain SS9) protein is ATP synthase subunit a 2.